Reading from the N-terminus, the 245-residue chain is Eukaryotic translation initiation factor 3 subunit K (245 aa).

Positions 46-227 (YDCYANLALL…EAKGTVVREN (182 aa)) constitute a PCI domain.

Belongs to the eIF-3 subunit K family. Component of the eukaryotic translation initiation factor 3 (eIF-3) complex.

The protein resides in the cytoplasm. Functionally, component of the eukaryotic translation initiation factor 3 (eIF-3) complex, which is involved in protein synthesis of a specialized repertoire of mRNAs and, together with other initiation factors, stimulates binding of mRNA and methionyl-tRNAi to the 40S ribosome. The eIF-3 complex specifically targets and initiates translation of a subset of mRNAs involved in cell proliferation. The sequence is that of Eukaryotic translation initiation factor 3 subunit K from Phaeosphaeria nodorum (strain SN15 / ATCC MYA-4574 / FGSC 10173) (Glume blotch fungus).